The chain runs to 584 residues: Mitochondrial sodium/calcium exchanger protein (584 aa).

A signal peptide spans M1–G26. Over T27 to L95 the chain is Extracellular. N60 carries N-linked (GlcNAc...) asparagine glycosylation. Residues L96–V116 traverse the membrane as a helical segment. Over T117 to A140 the chain is Cytoplasmic. Residues G141 to F161 form a helical membrane-spanning segment. Residues S162 to G168 are Extracellular-facing. A helical membrane pass occupies residues L169–I189. Residues T190–R200 are Cytoplasmic-facing. The helical transmembrane segment at P201–F221 threads the bilayer. The Extracellular segment spans residues R222 to T226. A helical membrane pass occupies residues L227–C247. Over T248–K325 the chain is Cytoplasmic. S258 carries the phosphoserine; by PKA modification. A helical membrane pass occupies residues A326–D346. Residues P347 to C360 lie on the Extracellular side of the membrane. A helical membrane pass occupies residues L361 to V381. Residues Y382 to E383 lie on the Cytoplasmic side of the membrane. Residues I384–V404 traverse the membrane as a helical segment. Topologically, residues T405–R416 are extracellular. Residues L417 to A437 form a helical membrane-spanning segment. The Cytoplasmic segment spans residues T438–R445. The helical transmembrane segment at S446–G466 threads the bilayer. Residues N467 to A487 lie on the Extracellular side of the membrane. Residues F488–L508 form a helical membrane-spanning segment. The Cytoplasmic segment spans residues L509–G524. A helical membrane pass occupies residues L525–V545. Residues P546 to F558 lie on the Extracellular side of the membrane. A helical transmembrane segment spans residues C559–I579. Residues H580 to M584 are Cytoplasmic-facing.

Belongs to the Ca(2+):cation antiporter (CaCA) (TC 2.A.19) family. SLC24A subfamily. Post-translationally, phosphorylation at Ser-258 by PKA prevents calcium overload. As to expression, present in pancreatic beta-cells (at protein level).

It localises to the mitochondrion inner membrane. It carries out the reaction Ca(2+)(in) + 3 Na(+)(out) = Ca(2+)(out) + 3 Na(+)(in). It catalyses the reaction 3 Li(+)(out) + Ca(2+)(in) = 3 Li(+)(in) + Ca(2+)(out). Inhibited by the sodium/calcium exchanger inhibitor CGP-37157. Strongly inhibited by zinc. In terms of biological role, mitochondrial sodium/calcium antiporter that mediates sodium-dependent calcium efflux from mitochondrion, by mediating the exchange of 3 sodium ions per 1 calcium ion. Plays a central role in mitochondrial calcium homeostasis by mediating mitochondrial calcium extrusion: calcium efflux is essential for mitochondrial function and cell survival, notably in cardiomyocytes. Regulates rates of glucose-dependent insulin secretion in pancreatic beta-cells during the first phase of insulin secretion: acts by mediating efflux of calcium from mitochondrion, thereby affecting cytoplasmic calcium responses. Required for store-operated Ca(2+) entry (SOCE) and Ca(2+) release-activated Ca(2+) (CRAC) channel regulation: sodium transport by SLC8B1 leads to promote calcium-shuttling that modulates mitochondrial redox status, thereby regulating SOCE activity. Involved in B-lymphocyte chemotaxis. Able to transport Ca(2+) in exchange of either Li(+) or Na(+), explaining how Li(+) catalyzes Ca(2+) exchange. In contrast to other members of the family its function is independent of K(+). This Homo sapiens (Human) protein is Mitochondrial sodium/calcium exchanger protein.